Here is a 74-residue protein sequence, read N- to C-terminus: MEMRKSCGFFFLLLLLVFASQVVVQTEGRVCESQSHGFHGLCNRDHNCALVCRNEGFSGGRCKRSRRCFCTRIC.

Positions 1-28 (MEMRKSCGFFFLLLLLVFASQVVVQTEG) are cleaved as a signal peptide. 4 disulfides stabilise this stretch: cysteine 31-cysteine 74, cysteine 42-cysteine 62, cysteine 48-cysteine 68, and cysteine 52-cysteine 70.

Belongs to the DEFL family. Protease inhibitor I18 (RTI/MTI-2) subfamily.

The protein localises to the secreted. The protein is Defensin-like protein of Glycine max (Soybean).